The following is a 156-amino-acid chain: ATP synthase subunit b (156 aa).

Residues 7-29 (LIGQMGTFLVFWWFVNKVIWPMF) form a helical membrane-spanning segment.

Belongs to the ATPase B chain family. F-type ATPases have 2 components, F(1) - the catalytic core - and F(0) - the membrane proton channel. F(1) has five subunits: alpha(3), beta(3), gamma(1), delta(1), epsilon(1). F(0) has three main subunits: a(1), b(2) and c(10-14). The alpha and beta chains form an alternating ring which encloses part of the gamma chain. F(1) is attached to F(0) by a central stalk formed by the gamma and epsilon chains, while a peripheral stalk is formed by the delta and b chains.

It is found in the cell inner membrane. Functionally, f(1)F(0) ATP synthase produces ATP from ADP in the presence of a proton or sodium gradient. F-type ATPases consist of two structural domains, F(1) containing the extramembraneous catalytic core and F(0) containing the membrane proton channel, linked together by a central stalk and a peripheral stalk. During catalysis, ATP synthesis in the catalytic domain of F(1) is coupled via a rotary mechanism of the central stalk subunits to proton translocation. In terms of biological role, component of the F(0) channel, it forms part of the peripheral stalk, linking F(1) to F(0). The sequence is that of ATP synthase subunit b from Dichelobacter nodosus (strain VCS1703A).